We begin with the raw amino-acid sequence, 817 residues long: tRNA(Met) cytidine acetyltransferase TmcA (817 aa).

ATP is bound by residues Gln265, 289–298 (GRGKSVSVGI), and Arg439. An N-acetyltransferase domain is found at 469-664 (ELIRKMEVYL…YTAIVIKPIS (196 aa)). Residues 589 to 591 (IAT), 596 to 602 (MDLGLGS), Glu629, and Arg636 contribute to the acetyl-CoA site.

It belongs to the RNA cytidine acetyltransferase family. TmcA subfamily.

The protein localises to the cytoplasm. It carries out the reaction cytidine(34) in elongator tRNA(Met) + acetyl-CoA + ATP + H2O = N(4)-acetylcytidine(34) in elongator tRNA(Met) + ADP + phosphate + CoA + H(+). It catalyses the reaction a cytidine in RNA + acetyl-CoA + ATP + H2O = an N(4)-acetylcytidine in RNA + ADP + phosphate + CoA + H(+). The enzyme catalyses a cytidine in tRNA + acetyl-CoA + ATP + H2O = an N(4)-acetylcytidine in tRNA + ADP + phosphate + CoA + H(+). The catalysed reaction is a cytidine in mRNA + acetyl-CoA + ATP + H2O = an N(4)-acetylcytidine in mRNA + ADP + phosphate + CoA + H(+). Catalyzes the formation of N(4)-acetylcytidine (ac(4)C) at the wobble position of tRNA(Met), by using acetyl-CoA as an acetyl donor and ATP (or GTP). Its function is as follows. Catalyzes the formation of N(4)-acetylcytidine (ac(4)C) sites in rRNA, tRNA, mRNA and non-coding (nc) RNA, almost always on the middle C of a CCG motif. In hyperthermophiles more acetylation is seen at higher temperatures. This is tRNA(Met) cytidine acetyltransferase TmcA from Pyrococcus abyssi (strain GE5 / Orsay).